Consider the following 292-residue polypeptide: Protein/nucleic acid deglycase HchA (292 aa).

Positions 1-12 (MSQDVNKLSKQP) are enriched in polar residues. The tract at residues 1 to 23 (MSQDVNKLSKQPTPDKAEDNAFF) is disordered. Cys-190 (nucleophile) is an active-site residue.

Belongs to the peptidase C56 family. HchA subfamily.

It is found in the cytoplasm. The catalysed reaction is N(omega)-(1-hydroxy-2-oxopropyl)-L-arginyl-[protein] + H2O = lactate + L-arginyl-[protein] + H(+). The enzyme catalyses N(6)-(1-hydroxy-2-oxopropyl)-L-lysyl-[protein] + H2O = lactate + L-lysyl-[protein] + H(+). It carries out the reaction S-(1-hydroxy-2-oxopropyl)-L-cysteinyl-[protein] + H2O = lactate + L-cysteinyl-[protein] + H(+). It catalyses the reaction N(omega)-(1-hydroxy-2-oxoethyl)-L-arginyl-[protein] + H2O = L-arginyl-[protein] + glycolate + H(+). The catalysed reaction is N(6)-(1-hydroxy-2-oxoethyl)-L-lysyl-[protein] + H2O = glycolate + L-lysyl-[protein] + H(+). The enzyme catalyses S-(1-hydroxy-2-oxoethyl)-L-cysteinyl-[protein] + H2O = glycolate + L-cysteinyl-[protein] + H(+). It carries out the reaction N(2)-(1-hydroxy-2-oxopropyl)-dGTP + H2O = lactate + dGTP + H(+). It catalyses the reaction N(2)-(1-hydroxy-2-oxopropyl)-GTP + H2O = lactate + GTP + H(+). The catalysed reaction is N(2)-(1-hydroxy-2-oxopropyl)-GDP + H2O = lactate + GDP + H(+). The enzyme catalyses N(2)-(1-hydroxy-2-oxopropyl)-GMP + H2O = lactate + GMP + H(+). It carries out the reaction N(2)-(1-hydroxy-2-oxoethyl)-dGTP + H2O = dGTP + glycolate + H(+). It catalyses the reaction N(2)-(1-hydroxy-2-oxoethyl)-GTP + H2O = glycolate + GTP + H(+). The catalysed reaction is N(2)-(1-hydroxy-2-oxoethyl)-GDP + H2O = glycolate + GDP + H(+). The enzyme catalyses N(2)-(1-hydroxy-2-oxoethyl)-GMP + H2O = glycolate + GMP + H(+). It carries out the reaction an N(2)-(1-hydroxy-2-oxopropyl)-guanosine in RNA + H2O = a guanosine in RNA + lactate + H(+). It catalyses the reaction an N(2)-(1-hydroxy-2-oxopropyl)-2'-deoxyguanosine in DNA + H2O = a 2'-deoxyguanosine in DNA + lactate + H(+). The catalysed reaction is an N(2)-(1-hydroxy-2-oxoethyl)-guanosine in RNA + H2O = a guanosine in RNA + glycolate + H(+). The enzyme catalyses an N(2)-(1-hydroxy-2-oxoethyl)-2'-deoxyguanosine in DNA + H2O = a 2'-deoxyguanosine in DNA + glycolate + H(+). Its function is as follows. Protein and nucleotide deglycase that catalyzes the deglycation of the Maillard adducts formed between amino groups of proteins or nucleotides and reactive carbonyl groups of glyoxals. Thus, functions as a protein deglycase that repairs methylglyoxal- and glyoxal-glycated proteins, and releases repaired proteins and lactate or glycolate, respectively. Deglycates cysteine, arginine and lysine residues in proteins, and thus reactivates these proteins by reversing glycation by glyoxals. Acts on early glycation intermediates (hemithioacetals and aminocarbinols), preventing the formation of Schiff bases and advanced glycation endproducts (AGE). Also functions as a nucleotide deglycase able to repair glycated guanine in the free nucleotide pool (GTP, GDP, GMP, dGTP) and in DNA and RNA. Is thus involved in a major nucleotide repair system named guanine glycation repair (GG repair), dedicated to reversing methylglyoxal and glyoxal damage via nucleotide sanitization and direct nucleic acid repair. Plays an important role in protecting cells from carbonyl stress. This Staphylococcus aureus (strain MRSA252) protein is Protein/nucleic acid deglycase HchA.